A 267-amino-acid polypeptide reads, in one-letter code: MIILIDSGNSRLKVGWFDPDAPQAAREPAPVAFDNLDLDALGRWLATLPRRPQRALGVNVAGLARGEAIAATLRAGGCDIRWLRAQPLAMGLRNGYRNPDQLGADRWACMVGVLARQPSVHPPLLVASFGTATTLDTIGPDNVFPGGLILPGPAMMRGALAYGTAHLPLADGLVADYPIDTHQAIASGIAAAQAGAIVRQWLAGRQRYGQAPEIYVAGGGWPEVRQEAERLLAVTGAAFGATPQPTYLDSPVLDGLAALAAQGAPTA.

ATP is bound at residue 6 to 13; sequence DSGNSRLK. Substrate contacts are provided by residues tyrosine 96 and 103–106; that span reads GADR. Aspartate 105 (proton acceptor) is an active-site residue. Threonine 131 provides a ligand contact to ATP. Threonine 181 is a substrate binding site.

This sequence belongs to the type III pantothenate kinase family. In terms of assembly, homodimer. It depends on NH4(+) as a cofactor. K(+) serves as cofactor.

It is found in the cytoplasm. The catalysed reaction is (R)-pantothenate + ATP = (R)-4'-phosphopantothenate + ADP + H(+). The protein operates within cofactor biosynthesis; coenzyme A biosynthesis; CoA from (R)-pantothenate: step 1/5. Catalyzes the phosphorylation of pantothenate (Pan), the first step in CoA biosynthesis. In terms of biological role, activates transcription of the pertussis toxin operon in a BvgAS-dependent manner. May interact with the alpha subunit of RNA polymerase. The polypeptide is Type III pantothenate kinase (coaX) (Bordetella pertussis (strain Tohama I / ATCC BAA-589 / NCTC 13251)).